A 352-amino-acid polypeptide reads, in one-letter code: tRNA N6-adenosine threonylcarbamoyltransferase (352 aa).

Residues H115 and H119 each coordinate Fe cation. Substrate contacts are provided by residues 138–142, D171, G184, and N276; that span reads LVSGG. Position 304 (D304) interacts with Fe cation.

The protein belongs to the KAE1 / TsaD family. The cofactor is Fe(2+).

The protein localises to the cytoplasm. It carries out the reaction L-threonylcarbamoyladenylate + adenosine(37) in tRNA = N(6)-L-threonylcarbamoyladenosine(37) in tRNA + AMP + H(+). Functionally, required for the formation of a threonylcarbamoyl group on adenosine at position 37 (t(6)A37) in tRNAs that read codons beginning with adenine. Is involved in the transfer of the threonylcarbamoyl moiety of threonylcarbamoyl-AMP (TC-AMP) to the N6 group of A37, together with TsaE and TsaB. TsaD likely plays a direct catalytic role in this reaction. The sequence is that of tRNA N6-adenosine threonylcarbamoyltransferase from Xanthomonas axonopodis pv. citri (strain 306).